The sequence spans 513 residues: Meiotically up-regulated gene 133 protein (513 aa).

The protein belongs to the UPF0300 family.

Its subcellular location is the golgi apparatus. The protein resides in the vacuole membrane. Its function is as follows. Has a role in meiosis. This is Meiotically up-regulated gene 133 protein (mug133) from Schizosaccharomyces pombe (strain 972 / ATCC 24843) (Fission yeast).